A 364-amino-acid polypeptide reads, in one-letter code: Chorismate synthase (364 aa).

Residue Arg48 coordinates NADP(+). Residues 131–133, 243–244, Gly288, 303–307, and Arg329 contribute to the FMN site; these read RSS, NA, and KPTSS.

It belongs to the chorismate synthase family. As to quaternary structure, homotetramer. The cofactor is FMNH2.

It carries out the reaction 5-O-(1-carboxyvinyl)-3-phosphoshikimate = chorismate + phosphate. It functions in the pathway metabolic intermediate biosynthesis; chorismate biosynthesis; chorismate from D-erythrose 4-phosphate and phosphoenolpyruvate: step 7/7. In terms of biological role, catalyzes the anti-1,4-elimination of the C-3 phosphate and the C-6 proR hydrogen from 5-enolpyruvylshikimate-3-phosphate (EPSP) to yield chorismate, which is the branch point compound that serves as the starting substrate for the three terminal pathways of aromatic amino acid biosynthesis. This reaction introduces a second double bond into the aromatic ring system. This is Chorismate synthase from Brucella melitensis biotype 2 (strain ATCC 23457).